Reading from the N-terminus, the 396-residue chain is MSDVFKKFLKLEAASGIILIMAAVLAMILANSGLASGYQAFLDTPVQVRIAALDINKPLLLWINDGFMAIFFLLVGLEVKREMLEGALSSRVQATFPAIAAVGGMLAPALIYTFFNYSDEAARAGWAIPAATDIAFALGVMALLGKRVPVSLKVFLLALAIMDDLGVIIIIALFYTQQLSLEALAVGILATLTLLWMNRRGEDRIGLYMLVGLVLWVAVLKSGVHATLAGVVVGFMIPLNGKRYASPLKHLEHALHPWSAYLILPLFAFANAGVSLDGIGLSSLLSPVPMGIMLGLFVGKPLGVFTISWLSVKLGIAQLPSGVNFKQIFAVSILCGIGFTMSMFIASLAFEHGGLDYGSYSRLGILVGSTLAAVVGYLALRMSLPNREADQSTEGL.

11 helical membrane-spanning segments follow: residues 14–34, 59–79, 95–115, 124–144, 154–174, 178–198, 205–225, 254–274, 278–298, 328–348, and 363–383; these read ASGI…NSGL, LLLW…GLEV, TFPA…YTFF, AGWA…MALL, VFLL…IALF, QLSL…LWMN, IGLY…SGVH, ALHP…NAGV, GIGL…GLFV, IFAV…IASL, and LGIL…LRMS.

This sequence belongs to the NhaA Na(+)/H(+) (TC 2.A.33) antiporter family.

The protein localises to the cell inner membrane. The catalysed reaction is Na(+)(in) + 2 H(+)(out) = Na(+)(out) + 2 H(+)(in). In terms of biological role, na(+)/H(+) antiporter that extrudes sodium in exchange for external protons. The protein is Na(+)/H(+) antiporter NhaA of Aeromonas salmonicida (strain A449).